We begin with the raw amino-acid sequence, 290 residues long: Eukaryotic translation initiation factor 3 subunit G (290 aa).

Disordered stretches follow at residues 1–35 and 157–200; these read MSRLGNRADWADDEEFDDPSALPPQQVTTNKDGTK and ESTG…GERM. The RRM domain maps to 210 to 288; it reads ATLRVTNVSE…LILRVEFAKR (79 aa).

It belongs to the eIF-3 subunit G family. Component of the eukaryotic translation initiation factor 3 (eIF-3) complex.

The protein resides in the cytoplasm. RNA-binding component of the eukaryotic translation initiation factor 3 (eIF-3) complex, which is involved in protein synthesis of a specialized repertoire of mRNAs and, together with other initiation factors, stimulates binding of mRNA and methionyl-tRNAi to the 40S ribosome. The eIF-3 complex specifically targets and initiates translation of a subset of mRNAs involved in cell proliferation. This subunit can bind 18S rRNA. The polypeptide is Eukaryotic translation initiation factor 3 subunit G (tif35) (Aspergillus clavatus (strain ATCC 1007 / CBS 513.65 / DSM 816 / NCTC 3887 / NRRL 1 / QM 1276 / 107)).